The primary structure comprises 338 residues: tRNA pseudouridine synthase D (338 aa).

Catalysis depends on Asp79, which acts as the Nucleophile. The region spanning 154–303 (GVPNYFGEQR…EEAWRANILY (150 aa)) is the TRUD domain.

It belongs to the pseudouridine synthase TruD family.

The enzyme catalyses uridine(13) in tRNA = pseudouridine(13) in tRNA. Responsible for synthesis of pseudouridine from uracil-13 in transfer RNAs. This is tRNA pseudouridine synthase D from Legionella pneumophila (strain Lens).